Reading from the N-terminus, the 439-residue chain is Tol-Pal system protein TolB (439 aa).

The first 24 residues, 1-24 (MRNGMRKIIAGVFIFVFLISNLYA), serve as a signal peptide directing secretion.

The protein belongs to the TolB family. In terms of assembly, the Tol-Pal system is composed of five core proteins: the inner membrane proteins TolA, TolQ and TolR, the periplasmic protein TolB and the outer membrane protein Pal. They form a network linking the inner and outer membranes and the peptidoglycan layer.

The protein resides in the periplasm. Its function is as follows. Part of the Tol-Pal system, which plays a role in outer membrane invagination during cell division and is important for maintaining outer membrane integrity. This is Tol-Pal system protein TolB from Francisella tularensis subsp. tularensis (strain FSC 198).